Here is a 668-residue protein sequence, read N- to C-terminus: BTB/POZ domain-containing protein At5g66560 (668 aa).

One can recognise a BTB domain in the interval Ser-21–Ala-133. Basic and acidic residues predominate over residues Glu-73–Glu-84. The disordered stretch occupies residues Glu-73–Glu-98. Residues Asp-85–Glu-98 show a composition bias toward acidic residues. Positions Glu-254 to Gln-530 constitute an NPH3 domain. Tyr-471 bears the Phosphotyrosine mark.

It belongs to the NPH3 family.

Its pathway is protein modification; protein ubiquitination. May act as a substrate-specific adapter of an E3 ubiquitin-protein ligase complex (CUL3-RBX1-BTB) which mediates the ubiquitination and subsequent proteasomal degradation of target proteins. This chain is BTB/POZ domain-containing protein At5g66560, found in Arabidopsis thaliana (Mouse-ear cress).